The chain runs to 328 residues: L-tyrosine isonitrile synthase (328 aa).

Belongs to the isocyanide synthase family. In terms of assembly, monomer in solution.

It catalyses the reaction D-ribulose 5-phosphate + L-tyrosine = (2S)-3-(4-hydroxyphenyl)-2-isocyanopropanoate + hydroxyacetone + formaldehyde + phosphate + H2O + H(+). In terms of biological role, involved in the biosynthesis of paerucumarin, a cyclized isocyano derivative of tyrosine. Responsible for the synthesis of the isonitrile group on tyrosine using the C2 of ribulose 5-phosphate as the source of the carbon atom. The chain is L-tyrosine isonitrile synthase from Pseudomonas aeruginosa (strain ATCC 15692 / DSM 22644 / CIP 104116 / JCM 14847 / LMG 12228 / 1C / PRS 101 / PAO1).